The sequence spans 62 residues: Conotoxin reg3.5 (62 aa).

A signal peptide spans 1-22; it reads MMFKLGVLLTICLLLFPLTGTA. Residues 23–49 constitute a propeptide that is removed on maturation; the sequence is LDGDQLAEHMLDISSGINDRWFDPVRK. Intrachain disulfides connect Cys50–Cys60, Cys51–Cys58, and Cys56–Cys61.

Belongs to the conotoxin M superfamily. Expressed by the venom duct.

The protein resides in the secreted. This chain is Conotoxin reg3.5, found in Conus regius (Crown cone).